The sequence spans 377 residues: MSVVSKGLENVIIKVTNLTFIDGEKGILRYRGYNIEDLVNYGSYEETIYLMLYGKLPTKKELNDLKAKLNEEYEVPQEVLDTIYLMPKEADAIGLLEVGTAALASIDKNFKWKENDKEKAISIIAKMATLVANVYRRKEGNKPRIPEPSDSFAKSFLLASFAREPTTDEINAMDKALILYTDHEVPASTTAALVAASTLSDMYSSLTAALAALKGPLHGGAAEEAFKQFIEIGDPNRVQNWFNDKVVNQKNRLMGFGHRVYKTYDPRAKIFKKLALTLIERNADARRYFEIAQKLEELGIKQFSSKGIYPNTDFYSGIVFYALGFPVYMFTALFALSRTLGWLAHIIEYVEEQHRLIRPRALYVGPEYQEYVSIDKR.

Residues His-258 and Asp-313 contribute to the active site.

This sequence belongs to the citrate synthase family. In terms of assembly, homodimer. In terms of processing, the N-terminus is blocked by acetylation.

It carries out the reaction oxaloacetate + acetyl-CoA + H2O = citrate + CoA + H(+). Its pathway is carbohydrate metabolism; tricarboxylic acid cycle; isocitrate from oxaloacetate: step 1/2. With respect to regulation, allosterically inhibited by NADH. The chain is Citrate synthase (gltA) from Saccharolobus solfataricus (strain ATCC 35092 / DSM 1617 / JCM 11322 / P2) (Sulfolobus solfataricus).